A 325-amino-acid polypeptide reads, in one-letter code: N-acetyl-gamma-glutamyl-phosphate reductase (325 aa).

The active site involves Cys135.

This sequence belongs to the NAGSA dehydrogenase family. Type 1 subfamily.

Its subcellular location is the cytoplasm. The catalysed reaction is N-acetyl-L-glutamate 5-semialdehyde + phosphate + NADP(+) = N-acetyl-L-glutamyl 5-phosphate + NADPH + H(+). The protein operates within amino-acid biosynthesis; L-arginine biosynthesis; N(2)-acetyl-L-ornithine from L-glutamate: step 3/4. In terms of biological role, catalyzes the NADPH-dependent reduction of N-acetyl-5-glutamyl phosphate to yield N-acetyl-L-glutamate 5-semialdehyde. In Flavobacterium johnsoniae (strain ATCC 17061 / DSM 2064 / JCM 8514 / BCRC 14874 / CCUG 350202 / NBRC 14942 / NCIMB 11054 / UW101) (Cytophaga johnsonae), this protein is N-acetyl-gamma-glutamyl-phosphate reductase.